Reading from the N-terminus, the 156-residue chain is MDITFTIFAQSLAFAALIWIVATKIWPPLIKVIEERQQKIAEGLAAADLGQKELAQAQEEIKKTLKNAHKKANEIIEQAHARAHQIIEAAKAEAIAETNRQQNLAQVEIEAAAKRAREELRKHVSILAVNGAEKLLKREIDVNTHKMLLDELAAEI.

The helical transmembrane segment at 3–23 (ITFTIFAQSLAFAALIWIVAT) threads the bilayer.

The protein belongs to the ATPase B chain family. F-type ATPases have 2 components, F(1) - the catalytic core - and F(0) - the membrane proton channel. F(1) has five subunits: alpha(3), beta(3), gamma(1), delta(1), epsilon(1). F(0) has three main subunits: a(1), b(2) and c(10-14). The alpha and beta chains form an alternating ring which encloses part of the gamma chain. F(1) is attached to F(0) by a central stalk formed by the gamma and epsilon chains, while a peripheral stalk is formed by the delta and b chains.

It localises to the cell inner membrane. F(1)F(0) ATP synthase produces ATP from ADP in the presence of a proton or sodium gradient. F-type ATPases consist of two structural domains, F(1) containing the extramembraneous catalytic core and F(0) containing the membrane proton channel, linked together by a central stalk and a peripheral stalk. During catalysis, ATP synthesis in the catalytic domain of F(1) is coupled via a rotary mechanism of the central stalk subunits to proton translocation. Functionally, component of the F(0) channel, it forms part of the peripheral stalk, linking F(1) to F(0). The polypeptide is ATP synthase subunit b (Xylella fastidiosa (strain M23)).